The following is a 270-amino-acid chain: Sorting nexin-11 (270 aa).

A PX domain is found at 16–132; sequence VITVRVQDPR…HLFLQSQLSV (117 aa). A 1,2-diacyl-sn-glycero-3-phospho-(1D-myo-inositol-3-phosphate) is bound by residues arginine 59, lysine 85, and arginine 99. An important for membrane trafficking region spans residues 135–139; that stretch reads IEACV. Over residues 168–177 the composition is skewed to basic and acidic residues; it reads SSSHLAKGDQ. Positions 168–203 are disordered; sequence SSSHLAKGDQPKSCCFLPRSGRRSSPSPPPSEEKDH.

This sequence belongs to the sorting nexin family. As to quaternary structure, monomer. Interacts with TRPV3; this interaction promotes TRPV3 trafficking from the cell membrane to lysosome for degradation.

The protein resides in the cell membrane. It localises to the endosome. The protein localises to the cytoplasm. Functionally, phosphoinositide-binding protein involved in protein sorting and membrane trafficking in endosomes. Regulates the levels of TRPV3 by promoting its trafficking from the cell membrane to lysosome for degradation. The chain is Sorting nexin-11 (SNX11) from Homo sapiens (Human).